The following is a 247-amino-acid chain: Caffeoyl-CoA O-methyltransferase 2 (247 aa).

Residue Lys21 participates in substrate binding. S-adenosyl-L-methionine contacts are provided by residues Thr63, Glu85, 87–88 (GV), Ser93, Asp111, and Ala140. Asp163 contributes to the substrate binding site. A divalent metal cation is bound at residue Asp163. Asp165 is an S-adenosyl-L-methionine binding site. A divalent metal cation contacts are provided by Asp189 and Asn190. Asn194 serves as a coordination point for substrate.

Belongs to the class I-like SAM-binding methyltransferase superfamily. Cation-dependent O-methyltransferase family. CCoAMT subfamily. The cofactor is a divalent metal cation.

The enzyme catalyses (E)-caffeoyl-CoA + S-adenosyl-L-methionine = (E)-feruloyl-CoA + S-adenosyl-L-homocysteine + H(+). It functions in the pathway aromatic compound metabolism; phenylpropanoid biosynthesis. Its function is as follows. Methylates caffeoyl-CoA to feruloyl-CoA and 5-hydroxyferuloyl-CoA to sinapoyl-CoA. Plays a role in the synthesis of feruloylated polysaccharides. Involved in the reinforcement of the plant cell wall. Also involved in the responding to wounding or pathogen challenge by the increased formation of cell wall-bound ferulic acid polymers. The sequence is that of Caffeoyl-CoA O-methyltransferase 2 (CCOAOMT2) from Populus trichocarpa (Western balsam poplar).